Reading from the N-terminus, the 121-residue chain is ATP synthase epsilon chain (121 aa).

Belongs to the ATPase epsilon chain family. F-type ATPases have 2 components, CF(1) - the catalytic core - and CF(0) - the membrane proton channel. CF(1) has five subunits: alpha(3), beta(3), gamma(1), delta(1), epsilon(1). CF(0) has three main subunits: a, b and c.

The protein localises to the cell membrane. Produces ATP from ADP in the presence of a proton gradient across the membrane. The sequence is that of ATP synthase epsilon chain from Mycobacterium sp. (strain JLS).